The following is a 173-amino-acid chain: T-cell surface glycoprotein CD3 gamma chain (173 aa).

The first 22 residues, 1 to 22, serve as a signal peptide directing secretion; that stretch reads MEQGKHLAGLILAVFLLQGTMA. The Extracellular portion of the chain corresponds to 23–111; the sequence is HVKEVKVDDN…NCIELNPSTV (89 aa). The region spanning 24 to 94 is the Ig-like domain; the sequence is VKEVKVDDNR…GSNNQSKSLQ (71 aa). Cys-42 and Cys-83 are disulfide-bonded. N-linked (GlcNAc...) asparagine glycans are attached at residues Asn-45 and Asn-88. The chain crosses the membrane as a helical span at residues 112-132; it reads AGFIFTEIVSIFLLAVGVYFI. The Cytoplasmic segment spans residues 133 to 173; the sequence is AGQEGVRQSRASDKQTLLNNDQLYQPLKEREDDQYSHLRKN. The residue at position 141 (Ser-141) is a Phosphoserine. Phosphoserine; by PKC is present on Ser-144. In terms of domain architecture, ITAM spans 145–173; sequence DKQTLLNNDQLYQPLKEREDDQYSHLRKN. The short motif at 149–150 is the Di-leucine motif element; it reads LL.

The TCR-CD3 complex is composed of a CD3D/CD3E and a CD3G/CD3E heterodimers that preferentially associate with TCRalpha and TCRbeta, respectively, to form TCRalpha/CD3E/CD3G and TCRbeta/CD3G/CD3E trimers. In turn, the hexamer interacts with CD3Z homodimer to form the TCR-CD3 complex. Alternatively, TCRalpha and TCRbeta can be replaced by TCRgamma and TCRdelta. Phosphorylated on Tyr residues after T-cell receptor triggering by LCK in association with CD4/CD8. Phosphorylated also by PKC; leading to the TCR complex down-regulation. In terms of processing, phosphorylated on Tyr residues after T-cell receptor triggering by LCK in association with CD4/CD8.

It localises to the cell membrane. In terms of biological role, part of the TCR-CD3 complex present on T-lymphocyte cell surface that plays an essential role in adaptive immune response. When antigen presenting cells (APCs) activate T-cell receptor (TCR), TCR-mediated signals are transmitted across the cell membrane by the CD3 chains CD3D, CD3E, CD3G and CD3Z. All CD3 chains contain immunoreceptor tyrosine-based activation motifs (ITAMs) in their cytoplasmic domain. Upon TCR engagement, these motifs become phosphorylated by Src family protein tyrosine kinases LCK and FYN, resulting in the activation of downstream signaling pathways. In addition to this role of signal transduction in T-cell activation, CD3G plays an essential role in the dynamic regulation of TCR expression at the cell surface. Indeed, constitutive TCR cycling is dependent on the di-leucine-based (diL) receptor-sorting motif present in CD3G. This chain is T-cell surface glycoprotein CD3 gamma chain (CD3G), found in Bos taurus (Bovine).